Consider the following 359-residue polypeptide: MNIYEQLQAVEDRYEELGELLSDPDVVSDTKRFMELSKEEASTRDTVTAYREYKQVLQNIVDAEEMIKESGGDADLEEMAKQELKDAKAEKEEYEEKLKILLLPKDPNDDKNIILEIRGAAGGDEAQLFAGDLLQMYQKYAESQGWRFEVMEASYNGVGGIKEVVAMVSGQSVYSKLKYESGAHRVQRVPVTESQGRVHTSTATVLVMPEIEEVEYDIDPKDLRVDIYHASGAGGQNVNKVATAVRIVHLPTNIKVEMQEERTQQKNRDKAMKIIRARVADHFAQIAQDEQDAERKSTIGTGDRSERIRTYNFPQNRVTDHRIGLTLQKLDTILAGKLDEVVDALVLYDQTQKLEELNK.

Glutamine 236 is modified (N5-methylglutamine). Residues glutamine 288–arginine 307 are disordered. Positions alanine 293 to arginine 307 are enriched in basic and acidic residues.

This sequence belongs to the prokaryotic/mitochondrial release factor family. Post-translationally, methylated by PrmC. Methylation increases the termination efficiency of RF1.

Its subcellular location is the cytoplasm. Its function is as follows. Peptide chain release factor 1 directs the termination of translation in response to the peptide chain termination codons UAG and UAA. This Streptococcus gordonii (strain Challis / ATCC 35105 / BCRC 15272 / CH1 / DL1 / V288) protein is Peptide chain release factor 1 (prfA).